Here is a 309-residue protein sequence, read N- to C-terminus: Homoserine kinase (309 aa).

91–101 (PIGSGLGSSAC) lines the ATP pocket.

Belongs to the GHMP kinase family. Homoserine kinase subfamily.

Its subcellular location is the cytoplasm. The catalysed reaction is L-homoserine + ATP = O-phospho-L-homoserine + ADP + H(+). Its pathway is amino-acid biosynthesis; L-threonine biosynthesis; L-threonine from L-aspartate: step 4/5. Catalyzes the ATP-dependent phosphorylation of L-homoserine to L-homoserine phosphate. This chain is Homoserine kinase, found in Buchnera aphidicola subsp. Schizaphis graminum (strain Sg).